Consider the following 429-residue polypeptide: 3-phosphoshikimate 1-carboxyvinyltransferase (429 aa).

3-phosphoshikimate contacts are provided by Lys-23, Ser-24, and Arg-28. Lys-23 serves as a coordination point for phosphoenolpyruvate. The phosphoenolpyruvate site is built by Gly-95 and Arg-123. 3-phosphoshikimate-binding residues include Ser-168, Gln-170, Asp-316, and Lys-343. Position 170 (Gln-170) interacts with phosphoenolpyruvate. Catalysis depends on Asp-316, which acts as the Proton acceptor. Residues Arg-347 and Arg-389 each coordinate phosphoenolpyruvate.

Belongs to the EPSP synthase family. In terms of assembly, monomer.

Its subcellular location is the cytoplasm. It catalyses the reaction 3-phosphoshikimate + phosphoenolpyruvate = 5-O-(1-carboxyvinyl)-3-phosphoshikimate + phosphate. The protein operates within metabolic intermediate biosynthesis; chorismate biosynthesis; chorismate from D-erythrose 4-phosphate and phosphoenolpyruvate: step 6/7. Functionally, catalyzes the transfer of the enolpyruvyl moiety of phosphoenolpyruvate (PEP) to the 5-hydroxyl of shikimate-3-phosphate (S3P) to produce enolpyruvyl shikimate-3-phosphate and inorganic phosphate. This chain is 3-phosphoshikimate 1-carboxyvinyltransferase, found in Bacillus thuringiensis (strain Al Hakam).